A 375-amino-acid chain; its full sequence is Naringenin 7-O-methyltransferase (375 aa).

136–142 (LNLDKVF) provides a ligand contact to substrate. Residues 168–188 (LFQYLGQDGNEPSNTLFNQAM) are substrate binding. Gly-219, Asp-242, Met-263, and Lys-276 together coordinate S-adenosyl-L-methionine. The active-site Proton acceptor is His-280.

The protein belongs to the class I-like SAM-binding methyltransferase superfamily. Cation-independent O-methyltransferase family. COMT subfamily.

It carries out the reaction (2S)-naringenin + S-adenosyl-L-methionine = (2S)-sakuranetin + S-adenosyl-L-homocysteine + H(+). Its function is as follows. S-adenosyl-L-methionine-dependent methyltransferase involved in the biosynthesis of the sakuranetin, an inducible defense mechanism of O.sativa against pathogen attack. This Oryza sativa subsp. japonica (Rice) protein is Naringenin 7-O-methyltransferase.